A 612-amino-acid chain; its full sequence is Bifunctional lycopene cyclase/phytoene synthase (612 aa).

The tract at residues 1-268 (MGWEYAQVHL…IVFGLIACDN (268 aa)) is lycopene beta-cyclase. Helical transmembrane passes span 3–23 (WEYA…LAAV), 31–51 (LDVF…VKGL), 112–130 (LFFF…MILS), 148–168 (IAGQ…VSSG), 171–191 (GMYM…LWSI), 203–223 (NTAL…TFAL), and 246–266 (IEEA…LIAC). The segment at 275–612 (TFPEHFPRTK…IRVAWSALNK (338 aa)) is phytoene synthase.

The protein in the N-terminal section; belongs to the lycopene beta-cyclase family. In the C-terminal section; belongs to the phytoene/squalene synthase family.

It is found in the membrane. The enzyme catalyses all-trans-lycopene = gamma-carotene. The catalysed reaction is gamma-carotene = all-trans-beta-carotene. It carries out the reaction 2 (2E,6E,10E)-geranylgeranyl diphosphate = 15-cis-phytoene + 2 diphosphate. It functions in the pathway carotenoid biosynthesis; beta-carotene biosynthesis. The protein operates within carotenoid biosynthesis; phytoene biosynthesis; all-trans-phytoene from geranylgeranyl diphosphate: step 1/1. Its function is as follows. Bifunctional enzyme; part of the car gene cluster that mediates the biosynthesis of neurosporaxanthin, a carboxylic apocarotenoid acting as an essential protective pigments and leading to orange pigmentation. CarAR catalyzes the first step of the pathway by converting geranylgeranyl diphosphate to phytoene, as well as the later cyclization step that transforms the carB product lycopene into gamma-carotene. CarAR also converts part of gamma-carotene into beta-carotene. Neurosporaxanthin is synthesized from geranyl-geranyl pyrophosphate (GGPP) through several enzymatic activities. Phytoene synthase activity performed by the bifunctional enzyme carAR first produces phytoene from geranyl-geranyl pyrophosphate (GGPP). The phytoene dehydrogenase carB then introduces 4 desaturations to lead to lycopene which is substrate of the carotene cyclase activity of carAR that leads to the production of gamma-carotene. CarB then performs a 5th desaturation reaction to yield torulene. Torulene is the substrate of the dioxidase carT that breaks the molecule, removing five carbon atoms to yield beta-apo-4'-carotenal, whereas the aldehyde dehydrogenase carD mediates the last step by converting beta-apo-4'-carotenal into neurosporaxanthin. The sequence is that of Bifunctional lycopene cyclase/phytoene synthase from Fusarium fujikuroi (Bakanae and foot rot disease fungus).